The following is a 359-amino-acid chain: Putative B3 domain-containing protein At3g24850 (359 aa).

Disordered stretches follow at residues 92 to 111 and 159 to 192; these read DSEI…LQNS and EKME…KRTG. A compositionally biased stretch (polar residues) spans 100-111; it reads TSDSQMKTLQNS. The TF-B3 DNA-binding region spans 250–351; sequence FNNLLQNDFL…VLCFAMEQSS (102 aa).

The protein resides in the nucleus. This is Putative B3 domain-containing protein At3g24850 from Arabidopsis thaliana (Mouse-ear cress).